We begin with the raw amino-acid sequence, 704 residues long: E3 ubiquitin-protein ligase MBR1 (704 aa).

Disordered stretches follow at residues 1-20 (MNPM…VNQV), 37-61 (NPAD…SSSH), 176-197 (SSLG…SPFG), 245-354 (LSLA…GENQ), 381-403 (SNPS…PRSN), and 436-525 (SLFV…RHRR). Residues 43–61 (FPNNSTPSGRPTYASSSSH) are compositionally biased toward polar residues. 2 stretches are compositionally biased toward low complexity: residues 184–196 (AAGE…ASPF) and 245–255 (LSLATPSQSSP). 3 stretches are compositionally biased toward polar residues: residues 281–290 (FHSTRNTDTL), 300–329 (RQPQ…NLPL), and 340–354 (RSSS…GENQ). A compositionally biased stretch (pro residues) spans 452–467 (QPNPTWIPPQNAPPHN). Low complexity predominate over residues 485 to 505 (SPSASHGGPLPLLPAGPSVSS). An RING-type; atypical zinc finger spans residues 656–697 (CCICQEEYVEGDNLGTLKCGHEFHKDCIKQWVMIKNLCPICK).

It belongs to the RING-type zinc finger family. As to quaternary structure, interacts with MED25 and UBC11.

It catalyses the reaction S-ubiquitinyl-[E2 ubiquitin-conjugating enzyme]-L-cysteine + [acceptor protein]-L-lysine = [E2 ubiquitin-conjugating enzyme]-L-cysteine + N(6)-ubiquitinyl-[acceptor protein]-L-lysine.. It participates in protein modification; protein ubiquitination. In terms of biological role, E3 ubiquitin-protein ligase that functions as a regulator of MED25 stability by targeting MED25 for degradation in a RING-H2-dependent way. Proteasome-dependent degradation of MED25 seems to activate its function as positive regulator of FLOWERING LOCUS T (FT) and is important to induce the expression of FT and consequently to promote flowering. This Arabidopsis thaliana (Mouse-ear cress) protein is E3 ubiquitin-protein ligase MBR1 (MBR1).